A 348-amino-acid polypeptide reads, in one-letter code: Isopentenyl-diphosphate delta-isomerase (348 aa).

9–10 (RK) provides a ligand contact to substrate. Residues 68 to 70 (AMT), Ser-98, and Asn-127 each bind FMN. Position 157 (Gln-157) interacts with substrate. Residue Glu-158 participates in Mg(2+) binding. Residues Lys-188, Ser-213, Thr-218, and 286–287 (AG) contribute to the FMN site.

This sequence belongs to the IPP isomerase type 2 family. In terms of assembly, homooctamer. Dimer of tetramers. It depends on FMN as a cofactor. NADPH serves as cofactor. The cofactor is Mg(2+).

It is found in the cytoplasm. It carries out the reaction isopentenyl diphosphate = dimethylallyl diphosphate. Involved in the biosynthesis of isoprenoids. Catalyzes the 1,3-allylic rearrangement of the homoallylic substrate isopentenyl (IPP) to its allylic isomer, dimethylallyl diphosphate (DMAPP). This chain is Isopentenyl-diphosphate delta-isomerase, found in Limosilactobacillus reuteri subsp. reuteri (strain JCM 1112) (Lactobacillus reuteri).